The sequence spans 260 residues: Ribosomal RNA small subunit methyltransferase A (260 aa).

S-adenosyl-L-methionine is bound by residues asparagine 16, leucine 18, glycine 43, glutamate 64, aspartate 86, and asparagine 108.

Belongs to the class I-like SAM-binding methyltransferase superfamily. rRNA adenine N(6)-methyltransferase family. RsmA subfamily.

The protein localises to the cytoplasm. The enzyme catalyses adenosine(1518)/adenosine(1519) in 16S rRNA + 4 S-adenosyl-L-methionine = N(6)-dimethyladenosine(1518)/N(6)-dimethyladenosine(1519) in 16S rRNA + 4 S-adenosyl-L-homocysteine + 4 H(+). Functionally, specifically dimethylates two adjacent adenosines (A1518 and A1519) in the loop of a conserved hairpin near the 3'-end of 16S rRNA in the 30S particle. May play a critical role in biogenesis of 30S subunits. The chain is Ribosomal RNA small subunit methyltransferase A from Buchnera aphidicola subsp. Baizongia pistaciae (strain Bp).